The chain runs to 417 residues: Serine hydroxymethyltransferase 1 (417 aa).

(6S)-5,6,7,8-tetrahydrofolate-binding positions include L121 and 125–127 (GHL). N6-(pyridoxal phosphate)lysine is present on K230. 355–357 (SPF) serves as a coordination point for (6S)-5,6,7,8-tetrahydrofolate.

The protein belongs to the SHMT family. Homodimer. Requires pyridoxal 5'-phosphate as cofactor.

It localises to the cytoplasm. The catalysed reaction is (6R)-5,10-methylene-5,6,7,8-tetrahydrofolate + glycine + H2O = (6S)-5,6,7,8-tetrahydrofolate + L-serine. It participates in one-carbon metabolism; tetrahydrofolate interconversion. It functions in the pathway amino-acid biosynthesis; glycine biosynthesis; glycine from L-serine: step 1/1. Functionally, catalyzes the reversible interconversion of serine and glycine with tetrahydrofolate (THF) serving as the one-carbon carrier. This reaction serves as the major source of one-carbon groups required for the biosynthesis of purines, thymidylate, methionine, and other important biomolecules. Also exhibits THF-independent aldolase activity toward beta-hydroxyamino acids, producing glycine and aldehydes, via a retro-aldol mechanism. This is Serine hydroxymethyltransferase 1 from Pseudomonas syringae pv. tomato (strain ATCC BAA-871 / DC3000).